The following is a 325-amino-acid chain: Lipid droplet-associated hydrolase (325 aa).

Residue Ser139 is the Nucleophile of the active site. Active-site charge relay system residues include Asp271 and His300.

The protein belongs to the AB hydrolase superfamily. LDAH family.

The protein resides in the lipid droplet. It is found in the endoplasmic reticulum. The enzyme catalyses a cholesterol ester + H2O = cholesterol + a fatty acid + H(+). In terms of biological role, probable serine lipid hydrolase associated with lipid droplets. Has low cholesterol esterase activity. Appears to lack triglyceride lipase activity. Involved in cholesterol and triglyceride homeostasis; stimulates cellular triglyceride accumulation and cellular cholesterol release. Acts antagonistically with PNPLA2/ATGL in regulation of cellular lipid stores. May regulate triglyceride accumulation indirectly through stimulation of PNPLA2/ATGL ubiquitination and proteasomal degradation. Promotes microtubule-dependent lipid droplet fusion. Highly expressed in macrophage-rich areas in atherosclerotic lesions, suggesting that it could promote cholesterol ester turnover in macrophages. In Rattus norvegicus (Rat), this protein is Lipid droplet-associated hydrolase.